The following is a 696-amino-acid chain: Polyribonucleotide nucleotidyltransferase (696 aa).

Residues Asp-483 and Asp-489 each coordinate Mg(2+). The KH domain maps to 550-609; the sequence is PRITTIYVKTDKIRDVIGSGGKNIRGITEATGVTIDIDDTGKINIASTDKAACDMAIKMI. The 69-residue stretch at 619–687 folds into the S1 motif domain; sequence GKLYMGLVKK…KQGKIKLSRK (69 aa).

The protein belongs to the polyribonucleotide nucleotidyltransferase family. Requires Mg(2+) as cofactor.

It localises to the cytoplasm. It carries out the reaction RNA(n+1) + phosphate = RNA(n) + a ribonucleoside 5'-diphosphate. Its function is as follows. Involved in mRNA degradation. Catalyzes the phosphorolysis of single-stranded polyribonucleotides processively in the 3'- to 5'-direction. The polypeptide is Polyribonucleotide nucleotidyltransferase (Geotalea daltonii (strain DSM 22248 / JCM 15807 / FRC-32) (Geobacter daltonii)).